Reading from the N-terminus, the 463-residue chain is D(5)-like dopamine receptor (463 aa).

The Extracellular portion of the chain corresponds to 1 to 39; sequence MENFYNETEPTEPRGGVDPLRVVTAAEDVPAPVGGVSVR. An N-linked (GlcNAc...) asparagine glycan is attached at Asn-6. Residues 40–65 form a helical membrane-spanning segment; the sequence is ALTGCVLCALIVSTLLGNTLVCAAVI. Over 66–76 the chain is Cytoplasmic; that stretch reads KFRHLRSKVTN. The helical transmembrane segment at 77–103 threads the bilayer; it reads AFVVSLAVSDLFVAVLVMPWRAVSEVA. Over 104-112 the chain is Extracellular; the sequence is GVWLFGRFC. Cys-112 and Cys-194 are oxidised to a cystine. Residues 113-135 traverse the membrane as a helical segment; the sequence is DTWVAFDIMCSTASILNLCVISM. The Cytoplasmic portion of the chain corresponds to 136–154; it reads DRYWAISNPFRYERRMTRR. Residues 155 to 180 form a helical membrane-spanning segment; it reads FAFLMIAVAWTLSVLISFIPVQLNWH. Over 181 to 198 the chain is Extracellular; sequence RADNNSSAHEQGDCNASL. A helical transmembrane segment spans residues 199–223; sequence NRTYAISSSLISFYIPVLIMVGTYT. Residues 224–273 are Cytoplasmic-facing; the sequence is RIFRIAQTQIRRISSLERAAGQRAQNQSHRASTHDESALKTSFKRETKVL. The chain crosses the membrane as a helical span at residues 274–301; it reads KTLSVIMGVFVFCWLPFFVLNCVVPFCD. Over 302–315 the chain is Extracellular; sequence VDKVGEPPCVSDTT. The chain crosses the membrane as a helical span at residues 316 to 337; the sequence is FNIFVWFGWANSSLNPVIYAFN. Residues 338–463 are Cytoplasmic-facing; the sequence is ADFRKAFTTI…PGQIQDLGDL (126 aa).

Belongs to the G-protein coupled receptor 1 family.

Its subcellular location is the cell membrane. Functionally, receptor for dopamine. This is D(5)-like dopamine receptor (dl) from Takifugu rubripes (Japanese pufferfish).